The primary structure comprises 357 residues: Peptide chain release factor 1 (357 aa).

Glutamine 234 is modified (N5-methylglutamine).

It belongs to the prokaryotic/mitochondrial release factor family. In terms of processing, methylated by PrmC. Methylation increases the termination efficiency of RF1.

The protein resides in the cytoplasm. Functionally, peptide chain release factor 1 directs the termination of translation in response to the peptide chain termination codons UAG and UAA. In Lactococcus lactis subsp. lactis (strain IL1403) (Streptococcus lactis), this protein is Peptide chain release factor 1 (prfA).